The chain runs to 226 residues: Ribonuclease 3 (226 aa).

Positions 6–128 (TNRLQKKLGY…LIGGVFLDSD (123 aa)) constitute an RNase III domain. Glutamate 41 provides a ligand contact to Mg(2+). The active site involves aspartate 45. The Mg(2+) site is built by aspartate 114 and glutamate 117. Residue glutamate 117 is part of the active site. The DRBM domain occupies 155-225 (DPKTRLQEYL…AEQALKLLEL (71 aa)).

The protein belongs to the ribonuclease III family. Homodimer. It depends on Mg(2+) as a cofactor.

The protein resides in the cytoplasm. The catalysed reaction is Endonucleolytic cleavage to 5'-phosphomonoester.. Digests double-stranded RNA. Involved in the processing of primary rRNA transcript to yield the immediate precursors to the large and small rRNAs (23S and 16S). Processes some mRNAs, and tRNAs when they are encoded in the rRNA operon. Processes pre-crRNA and tracrRNA of type II CRISPR loci if present in the organism. This is Ribonuclease 3 from Sodalis glossinidius (strain morsitans).